We begin with the raw amino-acid sequence, 153 residues long: Two-component response regulator ARR17 (153 aa).

The 129-residue stretch at 21 to 149 (HVLAVDDNLI…DVEKLKCHLL (129 aa)) folds into the Response regulatory domain. 4-aspartylphosphate is present on Asp82.

The protein belongs to the ARR family. Type-A subfamily. Post-translationally, two-component system major event consists of a His-to-Asp phosphorelay between a sensor histidine kinase (HK) and a response regulator (RR). In plants, the His-to-Asp phosphorelay involves an additional intermediate named Histidine-containing phosphotransfer protein (HPt). This multistep phosphorelay consists of a His-Asp-His-Asp sequential transfer of a phosphate group between first a His and an Asp of the HK protein, followed by the transfer to a conserved His of the HPt protein and finally the transfer to an Asp in the receiver domain of the RR protein.

It localises to the nucleus. Functionally, functions as a response regulator involved in His-to-Asp phosphorelay signal transduction system. Phosphorylation of the Asp residue in the receiver domain activates the ability of the protein to promote the transcription of target genes. Type-A response regulators seem to act as negative regulators of the cytokinin signaling. The polypeptide is Two-component response regulator ARR17 (ARR17) (Arabidopsis thaliana (Mouse-ear cress)).